A 198-amino-acid chain; its full sequence is Putative protein-methionine-sulfoxide reductase subunit YedZ1 (198 aa).

4 consecutive transmembrane segments (helical) span residues 12-32, 63-83, 124-144, and 167-187; these read WLRV…MSGW, FAAM…NIFS, AAYL…LVLW, and FIGM…VALV.

This sequence belongs to the HupC/HyaC/HydC family.

It is found in the cell inner membrane. In terms of biological role, part of the YedY1-YedZ1 system that may repair oxidized proteins containing methionine sulfoxide residues (Met-O). This is Putative protein-methionine-sulfoxide reductase subunit YedZ1 from Azospira oryzae (strain ATCC BAA-33 / DSM 13638 / PS) (Dechlorosoma suillum).